Consider the following 147-residue polypeptide: C-glycoside deglycosidase beta subunit (147 aa).

It belongs to the C-glycoside deglycosidase beta subunit family. Heterooctamer composed of four alpha subunits (DfgA) and four beta subunits (DfgB). Mn(2+) is required as a cofactor.

The enzyme catalyses 3''-dehydroisoorientin = 1,5-anhydro-D-erythro-hex-1-en-3-ulose + luteolin. It catalyses the reaction 3''-dehydroisovitexin = 1,5-anhydro-D-erythro-hex-1-en-3-ulose + apigenin. Activity is strongly reduced in the presence of chelating agents. Its function is as follows. Carbon-carbon bond-cleaving enzyme which participates in the metabolism of C-glycosides. Acts on the C6-glycosylated compounds 3''-dehydroisoorientin (3''-oxo-homoorientin) and 3''-dehydroisovitexin (3''-oxo-isovitexin). This is C-glycoside deglycosidase beta subunit from Eubacterium cellulosolvens (strain ATCC 43171 / JCM 9499 / 6) (Cillobacterium cellulosolvens).